A 307-amino-acid chain; its full sequence is Haloalkane dehalogenase (307 aa).

The region spanning 34-158 (PVLFLHGNPT…FQAFRTADVG (125 aa)) is the AB hydrolase-1 domain. Asp106 serves as the catalytic Nucleophile. Glu130 functions as the Proton donor in the catalytic mechanism. The Proton acceptor role is filled by His272.

The protein belongs to the haloalkane dehalogenase family. Type 2 subfamily. As to quaternary structure, monomer.

The catalysed reaction is 1-haloalkane + H2O = a halide anion + a primary alcohol + H(+). The protein operates within xenobiotic degradation; 1,2-dibromoethane degradation. In terms of biological role, catalyzes hydrolytic cleavage of carbon-halogen bonds in halogenated aliphatic compounds, leading to the formation of the corresponding primary alcohols, halide ions and protons. Has a broad substrate specificity, which includes mono- and di-chlorinated and brominated alkanes. The highest activity was found with 1,2-dibromoethane, whereas low activity was measured with the analog 1,2-dichloroethane. This is Haloalkane dehalogenase (dhaAF) from Mycobacterium sp. (strain GP1).